The chain runs to 458 residues: Tissue-resident T-cell transcription regulator protein ZNF683 (458 aa).

2 disordered regions span residues 84 to 109 and 249 to 275; these read PQDL…TDSE and TLHS…APTR. C2H2-type zinc fingers lie at residues 301-323, 329-351, and 357-379; these read YECN…LRVH, FQCA…HLVH, and HQCQ…LRLH.

This sequence belongs to the krueppel C2H2-type zinc-finger protein family. Expressed in tissue-resident memory T (Trm) cell population in non-lymphoid organs, such as skin and gut. Expressed in innate lymphocytes, including tissue-resident natural killer (trNK) and natural killer T (NKT) cells in thymus, spleen and liver.

Its subcellular location is the nucleus. Functionally, transcription factor that mediates a transcriptional program in various innate and adaptive immune tissue-resident lymphocyte T-cell types such as tissue-resident memory T (Trm), natural killer (trNK) and natural killer T (NKT) cells and negatively regulates gene expression of proteins that promote the egress of tissue-resident T-cell populations from non-lymphoid organs. Plays a role in the development, retention and long-term establishment of adaptive and innate tissue-resident lymphocyte T-cell types in non-lymphoid organs, such as the skin and gut, but also in other nonbarrier tissues like liver and kidney, and therefore may provide immediate immunological protection against reactivating infections or viral reinfection. Also plays a role in the differentiation of both thymic and peripheral NKT cells. Negatively regulates the accumulation of interferon-gamma (IFN-gamma) in NKT cells at steady state or after antigenic stimulation. Positively regulates granzyme B production in NKT cells after innate stimulation. Associates with the transcriptional repressor PRDM1/BLIMP1 to chromatin at gene promoter regions. In Mus musculus (Mouse), this protein is Tissue-resident T-cell transcription regulator protein ZNF683.